A 241-amino-acid chain; its full sequence is Triosephosphate isomerase (241 aa).

N9–K11 serves as a coordination point for substrate. H96 acts as the Electrophile in catalysis. The active-site Proton acceptor is E165. Substrate contacts are provided by residues G171, S204, and G225–G226.

This sequence belongs to the triosephosphate isomerase family. Homodimer.

Its subcellular location is the cytoplasm. The catalysed reaction is D-glyceraldehyde 3-phosphate = dihydroxyacetone phosphate. The protein operates within carbohydrate biosynthesis; gluconeogenesis. It participates in carbohydrate degradation; glycolysis; D-glyceraldehyde 3-phosphate from glycerone phosphate: step 1/1. Involved in the gluconeogenesis. Catalyzes stereospecifically the conversion of dihydroxyacetone phosphate (DHAP) to D-glyceraldehyde-3-phosphate (G3P). The polypeptide is Triosephosphate isomerase (Picosynechococcus sp. (strain ATCC 27264 / PCC 7002 / PR-6) (Agmenellum quadruplicatum)).